The following is a 408-amino-acid chain: Succinylornithine transaminase (408 aa).

Lys-252 carries the post-translational modification N6-(pyridoxal phosphate)lysine.

It belongs to the class-III pyridoxal-phosphate-dependent aminotransferase family. AstC subfamily. Pyridoxal 5'-phosphate serves as cofactor.

The enzyme catalyses N(2)-succinyl-L-ornithine + 2-oxoglutarate = N-succinyl-L-glutamate 5-semialdehyde + L-glutamate. The protein operates within amino-acid degradation; L-arginine degradation via AST pathway; L-glutamate and succinate from L-arginine: step 3/5. Functionally, catalyzes the transamination of N(2)-succinylornithine and alpha-ketoglutarate into N(2)-succinylglutamate semialdehyde and glutamate. Can also act as an acetylornithine aminotransferase. The protein is Succinylornithine transaminase of Salmonella typhimurium (strain LT2 / SGSC1412 / ATCC 700720).